A 3218-amino-acid polypeptide reads, in one-letter code: Serine/threonine-protein kinase Smg1 (3218 aa).

Residues 32-78 (LNNNGNHGDSSNEGGGGNGSGRGGATGSGNIAGLGGSESMWSPGGGK) form a disordered region. The segment covering 33-43 (NNNGNHGDSSN) has biased composition (low complexity). The span at 44-67 (EGGGGNGSGRGGATGSGNIAGLGG) shows a compositional bias: gly residues. S70 carries the post-translational modification Phosphoserine. Residues 1289–1692 (DAAAAAREEG…IFPAVVGANR (404 aa)) form the FAT domain. The stretch at 1643-1678 (APWKVIIPQLFSRLNHHEPYVRKSVCDLLCRLAKSR) is one HEAT repeat. The region spanning 1897–2232 (VESSVCVLPT…LGVGDLKYHK (336 aa)) is the PI3K/PI4K catalytic domain. Residues 1903-1909 (VLPTKTK) are G-loop. Residues 2101 to 2109 (GLGDRHLDN) are catalytic loop. The segment at 2121 to 2145 (HIDYNVCFEKGRTLRIPEKVPFRLT) is activation loop. An FATC domain is found at 3186 to 3218 (QRSTVAEQVDYVIREACNPENLAVLYEGWTPWV).

Belongs to the PI3/PI4-kinase family. Component of a post-splicing multiprotein NMD complex. The cofactor is Mn(2+).

The protein localises to the cytoplasm. It catalyses the reaction L-seryl-[protein] + ATP = O-phospho-L-seryl-[protein] + ADP + H(+). It carries out the reaction L-threonyl-[protein] + ATP = O-phospho-L-threonyl-[protein] + ADP + H(+). In terms of biological role, serine/threonine protein kinase involved in mRNA surveillance. Recognizes the substrate consensus sequence [ST]-Q. Involved in nonsense-mediated decay (NMD) of mRNAs containing premature stop codons, probably by phosphorylating Upf1. The sequence is that of Serine/threonine-protein kinase Smg1 (nonC) from Drosophila melanogaster (Fruit fly).